A 100-amino-acid chain; its full sequence is Small ribosomal subunit protein uS14c (100 aa).

Belongs to the universal ribosomal protein uS14 family. Part of the 30S ribosomal subunit.

The protein localises to the plastid. It localises to the chloroplast. Functionally, binds 16S rRNA, required for the assembly of 30S particles. This chain is Small ribosomal subunit protein uS14c, found in Fagopyrum esculentum subsp. ancestrale (Wild buckwheat).